The following is a 541-amino-acid chain: Membrane protein insertase YidC (541 aa).

The helical transmembrane segment at 6 to 26 threads the bilayer; that stretch reads SLLVLALIFISFLVYQQWQLD. The disordered stretch occupies residues 34 to 56; the sequence is EQTTSITATSDVPASSPSNSQAI. The next 4 helical transmembrane spans lie at 337–357, 416–436, 454–474, and 495–515; these read FWLLTFIQGIVSNWGLAIICV, LGGCLPILLQMPIFIALYWTF, LSAQDPYYILPILMGISMFLL, and PLIFMVFFLWFPSGLVLYWLV.

The protein belongs to the OXA1/ALB3/YidC family. Type 1 subfamily. Interacts with the Sec translocase complex via SecD. Specifically interacts with transmembrane segments of nascent integral membrane proteins during membrane integration.

Its subcellular location is the cell inner membrane. Functionally, required for the insertion and/or proper folding and/or complex formation of integral membrane proteins into the membrane. Involved in integration of membrane proteins that insert both dependently and independently of the Sec translocase complex, as well as at least some lipoproteins. Aids folding of multispanning membrane proteins. The protein is Membrane protein insertase YidC of Haemophilus influenzae (strain PittEE).